Here is a 115-residue protein sequence, read N- to C-terminus: Nucleoid-associated protein PMN2A_1347 (115 aa).

The segment at S89 to N115 is disordered.

The protein belongs to the YbaB/EbfC family. As to quaternary structure, homodimer.

It localises to the cytoplasm. Its subcellular location is the nucleoid. In terms of biological role, binds to DNA and alters its conformation. May be involved in regulation of gene expression, nucleoid organization and DNA protection. This is Nucleoid-associated protein PMN2A_1347 from Prochlorococcus marinus (strain NATL2A).